Consider the following 181-residue polypeptide: ATP synthase subunit b (181 aa).

A helical transmembrane segment spans residues 23-43; it reads FIHIPTFIYTALNLVILYFIL.

Belongs to the ATPase B chain family. As to quaternary structure, F-type ATPases have 2 components, F(1) - the catalytic core - and F(0) - the membrane proton channel. F(1) has five subunits: alpha(3), beta(3), gamma(1), delta(1), epsilon(1). F(0) has three main subunits: a(1), b(2) and c(10-14). The alpha and beta chains form an alternating ring which encloses part of the gamma chain. F(1) is attached to F(0) by a central stalk formed by the gamma and epsilon chains, while a peripheral stalk is formed by the delta and b chains.

Its subcellular location is the cell membrane. In terms of biological role, f(1)F(0) ATP synthase produces ATP from ADP in the presence of a proton or sodium gradient. F-type ATPases consist of two structural domains, F(1) containing the extramembraneous catalytic core and F(0) containing the membrane proton channel, linked together by a central stalk and a peripheral stalk. During catalysis, ATP synthesis in the catalytic domain of F(1) is coupled via a rotary mechanism of the central stalk subunits to proton translocation. Component of the F(0) channel, it forms part of the peripheral stalk, linking F(1) to F(0). The polypeptide is ATP synthase subunit b (Acetivibrio thermocellus (strain ATCC 27405 / DSM 1237 / JCM 9322 / NBRC 103400 / NCIMB 10682 / NRRL B-4536 / VPI 7372) (Clostridium thermocellum)).